The primary structure comprises 1107 residues: Voltage-gated delayed rectifier potassium channel KCNH8 (1107 aa).

Topologically, residues 1–225 are cytoplasmic; that stretch reads MPVMKGLLAP…HFSTFKAGWD (225 aa). Positions 18–90 constitute a PAS domain; it reads IATRFDGTHS…LQIEKSLEEK (73 aa). The PAC domain occupies 93–145; that stretch reads FKGEIMFYKKNGSPFWCLLDIVPIKNEKGDVVLFLASFKDITDTKVKITPEDK. The chain crosses the membrane as a helical span at residues 226–246; that stretch reads WLILLATFYVAVTVPYNVCFI. Topologically, residues 247-255 are extracellular; it reads GNDDLSTTR. A helical membrane pass occupies residues 256 to 276; it reads STTVSDIAVEILFIIDIILNF. At 277–298 the chain is on the cytoplasmic side; it reads RTTYVSKSGQVIFEARSICIHY. The helical transmembrane segment at 299 to 319 threads the bilayer; it reads VTTWFIIDLIAALPFDLLYAF. Residue asparagine 320 is glycosylated (N-linked (GlcNAc...) asparagine). The Extracellular segment spans residues 320–327; the sequence is NVTVVSLV. A helical; Voltage-sensor transmembrane segment spans residues 328–348; it reads HLLKTVRLLRLLRLLQKLDRY. Residues 349–357 are Cytoplasmic-facing; sequence SQHSTIVLT. Residues 358–378 form a helical membrane-spanning segment; it reads LLMSMFALLAHWMACIWYVIG. Residues 379 to 419 lie on the Extracellular side of the membrane; that stretch reads KMEREDNSLLKWEVGWLHELGKRLESPYYGNNTLGGPSIRS. N-linked (GlcNAc...) asparagine glycosylation occurs at asparagine 409. Positions 420-440 form an intramembrane region, pore-forming; it reads AYIAALYFTLSSLTSVGFGNV. The short motif at 434 to 439 is the Selectivity filter element; that stretch reads SVGFGN. Residues 441 to 448 lie on the Extracellular side of the membrane; the sequence is SANTDAEK. The helical transmembrane segment at 449–469 threads the bilayer; it reads IFSICTMLIGALMHALVFGNV. At 470-1107 the chain is on the cytoplasmic side; it reads TAIIQRMYSR…EVKDNKAINV (638 aa). The cNMP-binding domain stretch occupies residues 551 to 668; the sequence is LFECASRGCL…HKFVEDIQHD (118 aa). The segment covering 686-702 has biased composition (polar residues); the sequence is SNKSMVSQSEPKGNGNI. Disordered regions lie at residues 686–742, 764–791, 818–847, and 961–989; these read SNKS…NKKV, HSPI…KRKE, EDGN…PPLG, and VDPS…YHSP. The segment covering 710 to 724 has biased composition (acidic residues); that stretch reads VEDEEEEEEGEEEEA. A compositionally biased stretch (polar residues) spans 961 to 972; that stretch reads VDPSSVGSSPQR.

The protein belongs to the potassium channel family. H (Eag) (TC 1.A.1.20) subfamily. Kv12.1/KCNH8 sub-subfamily. The potassium channel is probably composed of a homo- or heterotetrameric complex of pore-forming alpha subunits that can associate with modulating beta subunits. Primarily expressed in the nervous system.

The protein localises to the membrane. It catalyses the reaction K(+)(in) = K(+)(out). Its function is as follows. Pore-forming (alpha) subunit of a voltage-gated delayed rectifier potassium channel that mediates outward-rectifying potassium currents. Elicits a slowly activating, non-inactivating and slowly deactivation outwards potassium current at depolarizating voltages from -30 mV to +50mV. Shows no obvious change in the activation rate from different holding potentials. Activation is strongly dependent on the pH of the external solution. This is Voltage-gated delayed rectifier potassium channel KCNH8 from Homo sapiens (Human).